A 288-amino-acid chain; its full sequence is Acetyl-coenzyme A carboxylase carboxyl transferase subunit beta (288 aa).

One can recognise a CoA carboxyltransferase N-terminal domain in the interval 34–288 (LFAKCPACKH…HLVAFHGGVS (255 aa)). Zn(2+) is bound by residues C38, C41, C56, and C59. The C4-type zinc finger occupies 38–59 (CPACKHMIYQKDLGPAKICPTC).

This sequence belongs to the AccD/PCCB family. As to quaternary structure, acetyl-CoA carboxylase is a heterohexamer composed of biotin carboxyl carrier protein (AccB), biotin carboxylase (AccC) and two subunits each of ACCase subunit alpha (AccA) and ACCase subunit beta (AccD). Zn(2+) is required as a cofactor.

The protein localises to the cytoplasm. It carries out the reaction N(6)-carboxybiotinyl-L-lysyl-[protein] + acetyl-CoA = N(6)-biotinyl-L-lysyl-[protein] + malonyl-CoA. The protein operates within lipid metabolism; malonyl-CoA biosynthesis; malonyl-CoA from acetyl-CoA: step 1/1. In terms of biological role, component of the acetyl coenzyme A carboxylase (ACC) complex. Biotin carboxylase (BC) catalyzes the carboxylation of biotin on its carrier protein (BCCP) and then the CO(2) group is transferred by the transcarboxylase to acetyl-CoA to form malonyl-CoA. The chain is Acetyl-coenzyme A carboxylase carboxyl transferase subunit beta from Streptococcus equi subsp. equi (strain 4047).